Here is a 579-residue protein sequence, read N- to C-terminus: Nuclear hormone receptor family member nhr-47 (579 aa).

Positions 8–83 (GTLCAVCDDI…VGMDKNSIQN (76 aa)) form a DNA-binding region, nuclear receptor. 2 consecutive NR C4-type zinc fingers follow at residues 11-31 (CAVC…CNGC) and 47-71 (CQGN…LQKC). The segment at 87–128 (RIGYTKRKRRHDDNDMEGGVHHSEHIRDGSSGSPQMNDESPE) is disordered. Positions 104–114 (GGVHHSEHIRD) are enriched in basic and acidic residues. Residues 164–553 (ADLHSYATLE…SLVKETSLGP (390 aa)) form the NR LBD domain.

This sequence belongs to the nuclear hormone receptor family.

Its subcellular location is the nucleus. Functionally, orphan nuclear receptor. The sequence is that of Nuclear hormone receptor family member nhr-47 (nhr-47) from Caenorhabditis elegans.